Consider the following 450-residue polypeptide: tRNA-2-methylthio-N(6)-dimethylallyladenosine synthase (450 aa).

The 119-residue stretch at 14–132 (GEFFIETWGC…FPNYLNEVKK (119 aa)) folds into the MTTase N-terminal domain. Residues C23, C59, C93, C169, C173, and C176 each contribute to the [4Fe-4S] cluster site. The 231-residue stretch at 155–385 (RKNSMKAFVT…VEVLNEISAK (231 aa)) folds into the Radical SAM core domain. Positions 388–450 (KAYEGKIEEV…NSFSLTGEEI (63 aa)) constitute a TRAM domain.

Belongs to the methylthiotransferase family. MiaB subfamily. As to quaternary structure, monomer. [4Fe-4S] cluster serves as cofactor.

The protein localises to the cytoplasm. The enzyme catalyses N(6)-dimethylallyladenosine(37) in tRNA + (sulfur carrier)-SH + AH2 + 2 S-adenosyl-L-methionine = 2-methylsulfanyl-N(6)-dimethylallyladenosine(37) in tRNA + (sulfur carrier)-H + 5'-deoxyadenosine + L-methionine + A + S-adenosyl-L-homocysteine + 2 H(+). Catalyzes the methylthiolation of N6-(dimethylallyl)adenosine (i(6)A), leading to the formation of 2-methylthio-N6-(dimethylallyl)adenosine (ms(2)i(6)A) at position 37 in tRNAs that read codons beginning with uridine. The sequence is that of tRNA-2-methylthio-N(6)-dimethylallyladenosine synthase from Clostridium botulinum (strain ATCC 19397 / Type A).